Reading from the N-terminus, the 952-residue chain is RNA polymerase-associated protein RapA (952 aa).

In terms of domain architecture, Helicase ATP-binding spans 164-334; the sequence is EVGRRYAPRV…FARLRLLDPD (171 aa). 177-184 provides a ligand contact to ATP; that stretch reads DEVGLGKT. The DEAH box motif lies at 280–283; that stretch reads DEAH. The 177-residue stretch at 492–668 folds into the Helicase C-terminal domain; it reads RVNWLLELLK…GKSDGLESLI (177 aa).

It belongs to the SNF2/RAD54 helicase family. RapA subfamily. As to quaternary structure, interacts with the RNAP. Has a higher affinity for the core RNAP than for the holoenzyme. Its ATPase activity is stimulated by binding to RNAP.

In terms of biological role, transcription regulator that activates transcription by stimulating RNA polymerase (RNAP) recycling in case of stress conditions such as supercoiled DNA or high salt concentrations. Probably acts by releasing the RNAP, when it is trapped or immobilized on tightly supercoiled DNA. Does not activate transcription on linear DNA. Probably not involved in DNA repair. The protein is RNA polymerase-associated protein RapA of Aliivibrio fischeri (strain ATCC 700601 / ES114) (Vibrio fischeri).